The primary structure comprises 146 residues: Snaclec mamushigin subunit beta (146 aa).

An N-terminal signal peptide occupies residues 1 to 23 (MGRFIFLSFGLLVVFVSLSGTGA). Intrachain disulfides connect C25–C36, C53–C142, and C119–C134. Residues 32–143 (YEGHCYRVFQ…CSRTYNVVCK (112 aa)) enclose the C-type lectin domain.

Heterodimer of subunits alpha and beta; disulfide-linked. As to expression, expressed by the venom gland.

It is found in the secreted. In terms of biological role, binds to platelet GPIbalpha (GP1BA) and enhances platelet aggregation at low-shear stress. At high-shear stress, blocks platelet aggregation in a dose-dependent manner. The polypeptide is Snaclec mamushigin subunit beta (Gloydius blomhoffii (Mamushi)).